The primary structure comprises 219 residues: 2-hydroxy-3-keto-5-methylthiopentenyl-1-phosphate phosphatase (219 aa).

Belongs to the HAD-like hydrolase superfamily. MtnX family.

It carries out the reaction 2-hydroxy-5-methylsulfanyl-3-oxopent-1-enyl phosphate + H2O = 1,2-dihydroxy-5-(methylsulfanyl)pent-1-en-3-one + phosphate. It participates in amino-acid biosynthesis; L-methionine biosynthesis via salvage pathway; L-methionine from S-methyl-5-thio-alpha-D-ribose 1-phosphate: step 4/6. In terms of biological role, dephosphorylates 2-hydroxy-3-keto-5-methylthiopentenyl-1-phosphate (HK-MTPenyl-1-P) yielding 1,2-dihydroxy-3-keto-5-methylthiopentene (DHK-MTPene). In Bacillus cereus (strain ATCC 10987 / NRS 248), this protein is 2-hydroxy-3-keto-5-methylthiopentenyl-1-phosphate phosphatase.